We begin with the raw amino-acid sequence, 242 residues long: Triosephosphate isomerase (242 aa).

Residue 9-11 (NWK) coordinates substrate. His90 serves as the catalytic Electrophile. Residue Glu162 is the Proton acceptor of the active site. Residues Gly168, Ser205, and 226–227 (GG) contribute to the substrate site.

This sequence belongs to the triosephosphate isomerase family. In terms of assembly, homodimer.

The protein localises to the cytoplasm. It catalyses the reaction D-glyceraldehyde 3-phosphate = dihydroxyacetone phosphate. The protein operates within carbohydrate biosynthesis; gluconeogenesis. It participates in carbohydrate degradation; glycolysis; D-glyceraldehyde 3-phosphate from glycerone phosphate: step 1/1. Involved in the gluconeogenesis. Catalyzes stereospecifically the conversion of dihydroxyacetone phosphate (DHAP) to D-glyceraldehyde-3-phosphate (G3P). The protein is Triosephosphate isomerase of Azoarcus sp. (strain BH72).